The primary structure comprises 428 residues: Phosphomethylpyrimidine synthase 1 (428 aa).

Residues Asn-65, Met-94, Tyr-123, His-158, 180–182 (SRG), 221–224 (DGMR), and Glu-260 contribute to the substrate site. Residue His-264 coordinates Zn(2+). Tyr-287 contacts substrate. His-328 is a binding site for Zn(2+). [4Fe-4S] cluster contacts are provided by Cys-405, Cys-408, and Cys-412.

This sequence belongs to the ThiC family. [4Fe-4S] cluster serves as cofactor.

It catalyses the reaction 5-amino-1-(5-phospho-beta-D-ribosyl)imidazole + S-adenosyl-L-methionine = 4-amino-2-methyl-5-(phosphooxymethyl)pyrimidine + CO + 5'-deoxyadenosine + formate + L-methionine + 3 H(+). It participates in cofactor biosynthesis; thiamine diphosphate biosynthesis. Catalyzes the synthesis of the hydroxymethylpyrimidine phosphate (HMP-P) moiety of thiamine from aminoimidazole ribotide (AIR) in a radical S-adenosyl-L-methionine (SAM)-dependent reaction. The sequence is that of Phosphomethylpyrimidine synthase 1 from Methanosarcina mazei (strain ATCC BAA-159 / DSM 3647 / Goe1 / Go1 / JCM 11833 / OCM 88) (Methanosarcina frisia).